The following is a 600-amino-acid chain: Sulfite reductase [NADPH] flavoprotein alpha-component (600 aa).

Residues 63-201 form the Flavodoxin-like domain; that stretch reads ITLISASQTG…VADQWRKQLT (139 aa). FMN is bound by residues 69 to 74, 116 to 119, and 152 to 161; these read SQTGNA, STQG, and LGDTSYERFC. One can recognise an FAD-binding FR-type domain in the interval 235 to 449; that stretch reads QAPLTAALAT…IEHNDNFRLP (215 aa). FAD is bound by residues Thr-323, His-357, 387-390, 405-407, Tyr-411, and 420-423; these read RLYS, TVG, and GGAS. NADP(+) contacts are provided by residues 520 to 521, 526 to 530, and Asp-562; these read SR and KIYVQ. Tyr-600 is a binding site for FAD.

Belongs to the NADPH-dependent sulphite reductase flavoprotein subunit CysJ family. The protein in the N-terminal section; belongs to the flavodoxin family. It in the C-terminal section; belongs to the flavoprotein pyridine nucleotide cytochrome reductase family. As to quaternary structure, alpha(8)-beta(8). The alpha component is a flavoprotein, the beta component is a hemoprotein. The cofactor is FAD. FMN is required as a cofactor.

It carries out the reaction hydrogen sulfide + 3 NADP(+) + 3 H2O = sulfite + 3 NADPH + 4 H(+). It participates in sulfur metabolism; hydrogen sulfide biosynthesis; hydrogen sulfide from sulfite (NADPH route): step 1/1. Component of the sulfite reductase complex that catalyzes the 6-electron reduction of sulfite to sulfide. This is one of several activities required for the biosynthesis of L-cysteine from sulfate. The flavoprotein component catalyzes the electron flow from NADPH -&gt; FAD -&gt; FMN to the hemoprotein component. This is Sulfite reductase [NADPH] flavoprotein alpha-component from Photorhabdus laumondii subsp. laumondii (strain DSM 15139 / CIP 105565 / TT01) (Photorhabdus luminescens subsp. laumondii).